We begin with the raw amino-acid sequence, 1546 residues long: Hybrid signal transduction histidine kinase D (1546 aa).

Positions 36-63 form a coiled coil; sequence MRKQKPDHEKTREELIEEINHLRAVSNS. A PAS domain is found at 65 to 131; sequence KNARIMLDEM…NIDNVREAVH (67 aa). The PAC domain occupies 139 to 193; it reads IRYETEIFGKSAGTEKITIDFSLMPLFNDKGEVSLILPEGRNITEKRLGELEIER. Residues 218-440 form the Histidine kinase 1 domain; the sequence is NVSHELRTPL…QFTLRLPLTP (223 aa). The residue at position 221 (His-221) is a Phosphohistidine; by autocatalysis. Residues 571–686 enclose the Response regulatory 1 domain; the sequence is IVLVVEDNPE…ELVARVVNLM (116 aa). Residue Asp-619 is modified to 4-aspartylphosphate. In terms of domain architecture, Histidine kinase 2 spans 747–1010; it reads NLSHELRTPL…QFTVVLPIIK (264 aa). His-750 carries the post-translational modification Phosphohistidine; by autocatalysis. 2 stretches are compositionally biased toward low complexity: residues 1013 to 1031 and 1042 to 1146; these read SSSNSSPSNQLSCSSSPPL and NYIN…SNNN. Disordered regions lie at residues 1013–1148, 1266–1285, and 1313–1350; these read SSSN…NNEK, NNSNNDDNSNNTTIPTPPSS, and PLSELKSSSNNNNNNNNNSNNNNNNSMSPNLRSPKANS. Residues 1313–1346 are compositionally biased toward low complexity; the sequence is PLSELKSSSNNNNNNNNNSNNNNNNSMSPNLRSP. Residues 1359 to 1483 form the Response regulatory 2 domain; it reads QIMLVDDLEE…ELSNSILTLI (125 aa). At Asp-1412 the chain carries 4-aspartylphosphate. Positions 1500–1546 are disordered; it reads QNNNNNNNNNNNNNNNNNNNNNNINNGNDDDSLLLTDSRPCKKANSQ. A compositionally biased stretch (low complexity) spans 1501-1526; the sequence is NNNNNNNNNNNNNNNNNNNNNNINNG.

It catalyses the reaction ATP + protein L-histidine = ADP + protein N-phospho-L-histidine.. Acts as a receptor histidine kinase for a signal transduction pathway. This protein undergoes an ATP-dependent autophosphorylation at a conserved histidine residue in the kinase core, and a phosphoryl group is then transferred to a conserved aspartate residue in the receiver domain. The sequence is that of Hybrid signal transduction histidine kinase D (dhkD) from Dictyostelium discoideum (Social amoeba).